The sequence spans 272 residues: 3-methyl-2-oxobutanoate hydroxymethyltransferase (272 aa).

Mg(2+)-binding residues include D43 and D82. 3-methyl-2-oxobutanoate is bound by residues 43-44 (DS), D82, and K112. A Mg(2+)-binding site is contributed by E114. E179 functions as the Proton acceptor in the catalytic mechanism.

The protein belongs to the PanB family. As to quaternary structure, homodecamer; pentamer of dimers. The cofactor is Mg(2+).

The protein localises to the cytoplasm. It carries out the reaction 3-methyl-2-oxobutanoate + (6R)-5,10-methylene-5,6,7,8-tetrahydrofolate + H2O = 2-dehydropantoate + (6S)-5,6,7,8-tetrahydrofolate. It functions in the pathway cofactor biosynthesis; (R)-pantothenate biosynthesis; (R)-pantoate from 3-methyl-2-oxobutanoate: step 1/2. Its function is as follows. Catalyzes the reversible reaction in which hydroxymethyl group from 5,10-methylenetetrahydrofolate is transferred onto alpha-ketoisovalerate to form ketopantoate. This Staphylococcus aureus (strain Mu3 / ATCC 700698) protein is 3-methyl-2-oxobutanoate hydroxymethyltransferase.